Here is a 444-residue protein sequence, read N- to C-terminus: Phosphoglucosamine mutase (444 aa).

Catalysis depends on serine 100, which acts as the Phosphoserine intermediate. Residues serine 100, aspartate 240, aspartate 242, and aspartate 244 each contribute to the Mg(2+) site. Serine 100 carries the post-translational modification Phosphoserine.

Belongs to the phosphohexose mutase family. Mg(2+) is required as a cofactor. In terms of processing, activated by phosphorylation.

The enzyme catalyses alpha-D-glucosamine 1-phosphate = D-glucosamine 6-phosphate. Its function is as follows. Catalyzes the conversion of glucosamine-6-phosphate to glucosamine-1-phosphate. The polypeptide is Phosphoglucosamine mutase (Moorella thermoacetica (strain ATCC 39073 / JCM 9320)).